Here is a 426-residue protein sequence, read N- to C-terminus: 3-phosphoshikimate 1-carboxyvinyltransferase (426 aa).

3-phosphoshikimate is bound by residues lysine 22, serine 23, and arginine 27. Lysine 22 provides a ligand contact to phosphoenolpyruvate. 2 residues coordinate phosphoenolpyruvate: glycine 96 and arginine 124. 3-phosphoshikimate is bound by residues serine 170, serine 171, glutamine 172, serine 198, aspartate 314, asparagine 337, and lysine 341. Residue glutamine 172 participates in phosphoenolpyruvate binding. The active-site Proton acceptor is the aspartate 314. Arginine 345, arginine 387, and lysine 412 together coordinate phosphoenolpyruvate.

It belongs to the EPSP synthase family. Monomer.

The protein resides in the cytoplasm. It catalyses the reaction 3-phosphoshikimate + phosphoenolpyruvate = 5-O-(1-carboxyvinyl)-3-phosphoshikimate + phosphate. Its pathway is metabolic intermediate biosynthesis; chorismate biosynthesis; chorismate from D-erythrose 4-phosphate and phosphoenolpyruvate: step 6/7. In terms of biological role, catalyzes the transfer of the enolpyruvyl moiety of phosphoenolpyruvate (PEP) to the 5-hydroxyl of shikimate-3-phosphate (S3P) to produce enolpyruvyl shikimate-3-phosphate and inorganic phosphate. In Shewanella woodyi (strain ATCC 51908 / MS32), this protein is 3-phosphoshikimate 1-carboxyvinyltransferase.